Reading from the N-terminus, the 707-residue chain is ATP-dependent RNA helicase DHX33 (707 aa).

The tract at residues 1–64 is disordered; it reads MPEEAGFPPA…LAQPSASPYP (64 aa). The required for nucleolar location stretch occupies residues 1–80; sequence MPEEAGFPPA…RRSLPIFQAR (80 aa). The span at 39–49 shows a compositional bias: gly residues; sequence GSGGRGGGGGR. A compositionally biased stretch (low complexity) spans 50 to 64; the sequence is RQQPPLAQPSASPYP. In terms of domain architecture, Helicase ATP-binding spans 84 to 252; sequence LAQLRNLDNA…FNGAPVLYLE (169 aa). 97 to 104 is an ATP binding site; sequence GETGSGKT. A DEAH box motif is present at residues 194–197; that stretch reads DEAH. A Helicase C-terminal domain is found at 277-450; the sequence is SVFQIHQEAP…SVMLQLLAMK (174 aa). Residues 471 to 562 are HA2; required for interaction with EIF3G and RPL26; it reads AIAQLDLLGA…ISSEGDHMTL (92 aa). Residues 547–558 carry the Critical for rDNA-binding motif; sequence GVRKKFISSEGD.

This sequence belongs to the DEAD box helicase family. DEAH subfamily. In terms of assembly, interacts with UBTF. Interacts with DDX3X, EIF3G and EIF3H; the interaction is independent of RNA. Interacts (via HA2 region and Helicase C-terminal domain) with the components of the large ribosomal subunit RPL3, RPL7, RPL26 and RPL27. Interacts (via DEAH box) with NLRP3 (via NACHT domain). Binds to mRNA. Binds to double-stranded RNA (via the helicase C-terminal domain). Interacts (via the helicase C-terminal domain) with MAVS. In terms of processing, ubiquitinated, leading to its degradation by the proteasome. Deubiquitinated by USP36.

The protein localises to the nucleus. It is found in the nucleolus. Its subcellular location is the nucleoplasm. It localises to the cytoplasm. The protein resides in the inflammasome. It catalyses the reaction ATP + H2O = ADP + phosphate + H(+). Its function is as follows. Implicated in nucleolar organization, ribosome biogenesis, protein synthesis and cytoplasmic dsRNA sensing. Stimulates RNA polymerase I transcription of the 47S precursor rRNA. Associates with ribosomal DNA (rDNA) loci where it is involved in POLR1A recruitment. In the cytoplasm, promotes elongation-competent 80S ribosome assembly at the late stage of mRNA translation initiation. Senses cytosolic dsRNA mediating NLRP3 inflammasome formation in macrophages and type I interferon production in myeloid dendritic cells. Required for NLRP3 activation induced by viral dsRNA and bacterial RNA. In dendritic cells, required for induction of type I interferon production induced by cytoplasmic dsRNA via the activation of MAPK and NF-kappa-B signaling pathways. This Homo sapiens (Human) protein is ATP-dependent RNA helicase DHX33.